We begin with the raw amino-acid sequence, 596 residues long: Bromodomain-containing protein 9 (596 aa).

Residues 1–10 (MGKKHKKHKS) are compositionally biased toward basic residues. Disordered regions lie at residues 1–31 (MGKK…QYYV) and 49–119 (EVTE…SEGE). Over residues 61–73 (SFYEDRSDHERER) the composition is skewed to basic and acidic residues. Basic residues predominate over residues 74–84 (HKEKKKKKKKK). The span at 85 to 98 (SEKEKDKYLDEDER) shows a compositional bias: basic and acidic residues. A compositionally biased stretch (basic residues) spans 99 to 109 (RRRKEEKKRKR). The Bromo domain occupies 148 to 252 (NESTPLQQLL…HTGFKMMSKQ (105 aa)). Residues 226–228 (TYN) form a histone H4K5ac H4K8ac and histone H4K5bu H4K8bu binding region. Residues 537–547 (DFHDVHNDRGG) show a composition bias toward basic and acidic residues. Positions 537–596 (DFHDVHNDRGGSRPSSSSSVSNNSERDHHLGSPSRISVGEQQDIHDPYEFLQSPETENQN) are disordered. Positions 548–559 (SRPSSSSSVSNN) are enriched in low complexity.

As to quaternary structure, binds acetylated histones H3 and H4. Binds butyrylated histone H4.

Its subcellular location is the nucleus. In terms of biological role, plays a role in chromatin remodeling and regulation of transcription. Acts as a chromatin reader that recognizes and binds acylated histones: binds histones that are acetylated and/or butyrylated. The sequence is that of Bromodomain-containing protein 9 (brd9) from Xenopus tropicalis (Western clawed frog).